The following is a 452-amino-acid chain: Chaperone SurA (452 aa).

An N-terminal signal peptide occupies residues 1–28 (MKKTLRFAAVVSSLAAASALLAAAPAAA). 2 consecutive PpiC domains span residues 186–288 (QQDL…RLVD) and 302–400 (IVQT…QVLS).

It localises to the periplasm. The catalysed reaction is [protein]-peptidylproline (omega=180) = [protein]-peptidylproline (omega=0). Its function is as follows. Chaperone involved in the correct folding and assembly of outer membrane proteins. Recognizes specific patterns of aromatic residues and the orientation of their side chains, which are found more frequently in integral outer membrane proteins. May act in both early periplasmic and late outer membrane-associated steps of protein maturation. This Burkholderia lata (strain ATCC 17760 / DSM 23089 / LMG 22485 / NCIMB 9086 / R18194 / 383) protein is Chaperone SurA.